Here is a 548-residue protein sequence, read N- to C-terminus: Probable malate:quinone oxidoreductase (548 aa).

The tract at residues 521 to 548 (DKPQAADSTPKPQLKPQPVQKEVADIAL) is disordered. Positions 530–541 (PKPQLKPQPVQK) are enriched in low complexity.

This sequence belongs to the MQO family. The cofactor is FAD.

It catalyses the reaction (S)-malate + a quinone = a quinol + oxaloacetate. It functions in the pathway carbohydrate metabolism; tricarboxylic acid cycle; oxaloacetate from (S)-malate (quinone route): step 1/1. This chain is Probable malate:quinone oxidoreductase, found in Escherichia coli O139:H28 (strain E24377A / ETEC).